The sequence spans 339 residues: MARIIALDGAQGEGGGQILRSALSLSMITGQPFEMSGIRAGRAKPGLLRQHLTAVRAATEICGAQVNGDELGSQQLRFTPGPIRGGEYRFAIGSAGSCMLVLQTVLPALWFADGSSRVEVHGGTHNQAAPSADFICRVWEPLLARMGISQRTTLIKHGFYPAGGGAAATVVEPAASLRGLTLISRGETLRTTAEALLAAVPYHVGEREVATLEAHFPQAEKNVVALEGGCGPGNALSLMIQSEQLTELFAAFGVKGTSAEAVANQVAHEARRYLASPAAVGEHLADQLILPLALAGEGAFTVARASAHLLTNIAVVERFLPVRFSCEATESGYLVRVSD.

ATP contacts are provided by residues Gln-103 and 283 to 287 (HLADQ). His-308 functions as the Tele-AMP-histidine intermediate in the catalytic mechanism.

The protein belongs to the RNA 3'-terminal cyclase family. Type 1 subfamily.

It localises to the cytoplasm. It catalyses the reaction a 3'-end 3'-phospho-ribonucleotide-RNA + ATP = a 3'-end 2',3'-cyclophospho-ribonucleotide-RNA + AMP + diphosphate. In terms of biological role, catalyzes the conversion of 3'-phosphate to a 2',3'-cyclic phosphodiester at the end of RNA. The mechanism of action of the enzyme occurs in 3 steps: (A) adenylation of the enzyme by ATP; (B) transfer of adenylate to an RNA-N3'P to produce RNA-N3'PP5'A; (C) and attack of the adjacent 2'-hydroxyl on the 3'-phosphorus in the diester linkage to produce the cyclic end product. The biological role of this enzyme is unknown but it is likely to function in some aspects of cellular RNA processing. This is RNA 3'-terminal phosphate cyclase from Salmonella typhimurium (strain LT2 / SGSC1412 / ATCC 700720).